The following is a 304-amino-acid chain: Acetylglutamate kinase (304 aa).

Substrate-binding positions include 69-70, Arg-91, and Asn-202; that span reads GG.

It belongs to the acetylglutamate kinase family. ArgB subfamily.

The protein localises to the cytoplasm. It catalyses the reaction N-acetyl-L-glutamate + ATP = N-acetyl-L-glutamyl 5-phosphate + ADP. The protein operates within amino-acid biosynthesis; L-arginine biosynthesis; N(2)-acetyl-L-ornithine from L-glutamate: step 2/4. Functionally, catalyzes the ATP-dependent phosphorylation of N-acetyl-L-glutamate. The polypeptide is Acetylglutamate kinase (Caulobacter vibrioides (strain ATCC 19089 / CIP 103742 / CB 15) (Caulobacter crescentus)).